We begin with the raw amino-acid sequence, 140 residues long: Small ribosomal subunit protein uS11c (140 aa).

Belongs to the universal ribosomal protein uS11 family. As to quaternary structure, part of the 30S ribosomal subunit.

It is found in the plastid. The protein resides in the chloroplast. In Pelargonium hortorum (Common geranium), this protein is Small ribosomal subunit protein uS11c.